The primary structure comprises 128 residues: Small ribosomal subunit protein uS13 (128 aa).

The disordered stretch occupies residues 85 to 128 (GSYRGLRHRRSLPVRGQRTHTNARTRKGPRRGTVANKKKATGKT). Basic residues predominate over residues 89–128 (GLRHRRSLPVRGQRTHTNARTRKGPRRGTVANKKKATGKT).

Belongs to the universal ribosomal protein uS13 family. In terms of assembly, part of the 30S ribosomal subunit. Forms a loose heterodimer with protein S19. Forms two bridges to the 50S subunit in the 70S ribosome.

Functionally, located at the top of the head of the 30S subunit, it contacts several helices of the 16S rRNA. In the 70S ribosome it contacts the 23S rRNA (bridge B1a) and protein L5 of the 50S subunit (bridge B1b), connecting the 2 subunits; these bridges are implicated in subunit movement. Contacts the tRNAs in the A and P-sites. This is Small ribosomal subunit protein uS13 from Solibacter usitatus (strain Ellin6076).